The following is a 429-amino-acid chain: Serine hydroxymethyltransferase 1 (429 aa).

Residues L125 and G129 to L131 each bind (6S)-5,6,7,8-tetrahydrofolate. The residue at position 234 (K234) is an N6-(pyridoxal phosphate)lysine.

This sequence belongs to the SHMT family. In terms of assembly, homodimer. The cofactor is pyridoxal 5'-phosphate.

The protein resides in the cytoplasm. It carries out the reaction (6R)-5,10-methylene-5,6,7,8-tetrahydrofolate + glycine + H2O = (6S)-5,6,7,8-tetrahydrofolate + L-serine. It participates in one-carbon metabolism; tetrahydrofolate interconversion. Its pathway is amino-acid biosynthesis; glycine biosynthesis; glycine from L-serine: step 1/1. In terms of biological role, catalyzes the reversible interconversion of serine and glycine with tetrahydrofolate (THF) serving as the one-carbon carrier. This reaction serves as the major source of one-carbon groups required for the biosynthesis of purines, thymidylate, methionine, and other important biomolecules. Also exhibits THF-independent aldolase activity toward beta-hydroxyamino acids, producing glycine and aldehydes, via a retro-aldol mechanism. The sequence is that of Serine hydroxymethyltransferase 1 from Agrobacterium fabrum (strain C58 / ATCC 33970) (Agrobacterium tumefaciens (strain C58)).